A 266-amino-acid chain; its full sequence is 2-C-methyl-D-erythritol 4-phosphate cytidylyltransferase (266 aa).

Over residues 234–251 the composition is skewed to basic and acidic residues; the sequence is ADDARSAEARSAEARSEE. The disordered stretch occupies residues 234–266; sequence ADDARSAEARSAEARSEEPQFAGARSTDARSGG.

This sequence belongs to the IspD/TarI cytidylyltransferase family. IspD subfamily.

It carries out the reaction 2-C-methyl-D-erythritol 4-phosphate + CTP + H(+) = 4-CDP-2-C-methyl-D-erythritol + diphosphate. It participates in isoprenoid biosynthesis; isopentenyl diphosphate biosynthesis via DXP pathway; isopentenyl diphosphate from 1-deoxy-D-xylulose 5-phosphate: step 2/6. Functionally, catalyzes the formation of 4-diphosphocytidyl-2-C-methyl-D-erythritol from CTP and 2-C-methyl-D-erythritol 4-phosphate (MEP). This Frankia casuarinae (strain DSM 45818 / CECT 9043 / HFP020203 / CcI3) protein is 2-C-methyl-D-erythritol 4-phosphate cytidylyltransferase.